The primary structure comprises 61 residues: uncharacterized protein (61 aa).

2 helical membrane passes run 7–24 (FNVF…YKLF) and 29–48 (VSTT…IVGL).

The protein resides in the cell membrane. This is an uncharacterized protein from Bacillus subtilis (strain 168).